The primary structure comprises 153 residues: ATP synthase subunit b' (153 aa).

The chain crosses the membrane as a helical span at residues 23–40 (LMAIQVVALTYILNSLFF).

It belongs to the ATPase B chain family. In terms of assembly, F-type ATPases have 2 components, F(1) - the catalytic core - and F(0) - the membrane proton channel. F(1) has five subunits: alpha(3), beta(3), gamma(1), delta(1), epsilon(1). F(0) has four main subunits: a(1), b(1), b'(1) and c(10-14). The alpha and beta chains form an alternating ring which encloses part of the gamma chain. F(1) is attached to F(0) by a central stalk formed by the gamma and epsilon chains, while a peripheral stalk is formed by the delta, b and b' chains.

It is found in the cellular thylakoid membrane. Functionally, f(1)F(0) ATP synthase produces ATP from ADP in the presence of a proton or sodium gradient. F-type ATPases consist of two structural domains, F(1) containing the extramembraneous catalytic core and F(0) containing the membrane proton channel, linked together by a central stalk and a peripheral stalk. During catalysis, ATP synthesis in the catalytic domain of F(1) is coupled via a rotary mechanism of the central stalk subunits to proton translocation. Component of the F(0) channel, it forms part of the peripheral stalk, linking F(1) to F(0). The b'-subunit is a diverged and duplicated form of b found in plants and photosynthetic bacteria. This Prochlorococcus marinus (strain AS9601) protein is ATP synthase subunit b'.